Consider the following 376-residue polypeptide: NAD-capped RNA hydrolase (376 aa).

The Zn(2+) site is built by cysteine 182, cysteine 185, cysteine 200, and cysteine 211. Substrate contacts are provided by residues tyrosine 222, 258-260, glutamate 274, glutamate 278, and glutamate 321; that span reads AGF. In terms of domain architecture, Nudix hydrolase spans 223–351; the sequence is PRTDPCVIMV…KDGPAPILFP (129 aa). Residues alanine 258, glutamate 274, glutamate 278, and glutamate 321 each coordinate Mg(2+). The Nudix box motif lies at 259 to 280; the sequence is GFLEPGESLEEAVVRETYEESG. The short motif at 374 to 376 is the Microbody targeting signal element; sequence VKM.

Belongs to the Nudix hydrolase family. NudC subfamily. Homodimer. Mg(2+) serves as cofactor. It depends on Zn(2+) as a cofactor.

It catalyses the reaction a 5'-end NAD(+)-phospho-ribonucleoside in mRNA + H2O = a 5'-end phospho-adenosine-phospho-ribonucleoside in mRNA + beta-nicotinamide D-ribonucleotide + 2 H(+). It carries out the reaction NAD(+) + H2O = beta-nicotinamide D-ribonucleotide + AMP + 2 H(+). The enzyme catalyses NADH + H2O = reduced beta-nicotinamide D-ribonucleotide + AMP + 2 H(+). MRNA decapping enzyme that specifically removes the nicotinamide adenine dinucleotide (NAD) cap from a subset of mRNAs by hydrolyzing the diphosphate linkage to produce nicotinamide mononucleotide (NMN) and 5' monophosphate mRNA. The NAD-cap is present at the 5'-end of some RNAs; in contrast to the canonical N7 methylguanosine (m7G) cap, the NAD cap promotes mRNA decay. Mediates the hydrolysis of some nucleoside diphosphate derivatives. In Schizosaccharomyces pombe (strain 972 / ATCC 24843) (Fission yeast), this protein is NAD-capped RNA hydrolase.